A 517-amino-acid polypeptide reads, in one-letter code: Cytochrome P450 monooxygenase sdnE (517 aa).

The helical transmembrane segment at 4–24 (SSILQTLAVLYVLYLLGLIIY) threads the bilayer. An N-linked (GlcNAc...) asparagine glycan is attached at Asn111. Residues 219 to 239 (FPVVFIILGLSPRAMLKLVVP) traverse the membrane as a helical segment. Cys456 lines the heme pocket.

Belongs to the cytochrome P450 family. The cofactor is heme.

The protein localises to the membrane. It functions in the pathway antibiotic biosynthesis. In terms of biological role, cytochrome P450 monooxygenase; part of the gene cluster that mediates the biosynthesis of sordarin and hypoxysordarin, glycoside antibiotics with a unique tetracyclic diterpene aglycone structure. First, the geranylgeranyl diphosphate synthase sdnC constructs GGDP from farnesyl diphosphate and isopentenyl diphosphate. The diterpene cyclase sdnA then catalyzes the cyclization of GGDP to afford cycloaraneosene. Cycloaraneosene is then hydroxylated four times by the putative cytochrome P450 monooxygenases sdnB, sdnE, sdnF and sdnH to give a hydroxylated cycloaraneosene derivative such as cycloaraneosene-8,9,13,19-tetraol. Although the order of the hydroxylations is unclear, at least C8, C9 and C13 of the cycloaraneosene skeleton are hydroxylated before the sordaricin formation. Dehydration of the 13-hydroxy group of the hydroxylated cycloaraneosene derivative might be catalyzed by an unassigned hypothetical protein such as sdnG and sdnP to construct the cyclopentadiene moiety. The FAD-dependent oxidoreductase sdnN is proposed to catalyze the oxidation at C9 of the hydroxylated cycloaraneosene derivative and also catalyze the Baeyer-Villiger oxidation to give the lactone intermediate. The presumed lactone intermediate would be hydrolyzed to give an acrolein moiety and a carboxylate moiety. Then, [4+2]cycloaddition would occur between the acrolein moiety and the cyclopentadiene moiety to give sordaricin. SdnN might also be involved in the [4+2]cycloaddition after the hypothesized oxidation to accommodate the oxidized product and prompt the [4+2]cycloaddition. GDP-6-deoxy-D-altrose may be biosynthesized from GDP-D-mannose by the putative GDP-mannose-4,6-dehydratase sdnI and the short-chain dehydrogenase sdnK. The glycosyltransferase sdnJ catalyzes the attachment of 6-deoxy-D-altrose onto the 19-hydroxy group of sordaricin to give 4'-O-demethylsordarin. The methyltransferase sdnD would complete the biosynthesis of sordarin. Sordarin can be further modified into hypoxysordarin. The unique acyl chain at the 3'-hydroxy group of hypoxysordarin would be constructed by an iterative type I PKS sdnO and the trans-acting polyketide methyltransferase sdnL. SdnL would be responsible for the introduction of an alpha-methyl group of the polyketide chain. Alternatively, the beta-lactamase-like protein sdnR might be responsible for the cleavage and transfer of the polyketide chain from the PKS sdnO to sordarin. Two putative cytochrome P450 monooxygenases, sdnQ and sdnT, might catalyze the epoxidations of the polyketide chain to complete the biosynthesis of hypoxysordarin. Transcriptional regulators sdnM and sdnS are presumably encoded for the transcriptional regulation of the expression of the sdn gene cluster. This chain is Cytochrome P450 monooxygenase sdnE, found in Sordaria araneosa (Pleurage araneosa).